A 287-amino-acid polypeptide reads, in one-letter code: Probable endonuclease 4 (287 aa).

Zn(2+) is bound by residues His69, His109, Glu144, Asp178, His181, His215, Asp228, His230, and Glu260.

Belongs to the AP endonuclease 2 family. Zn(2+) is required as a cofactor.

It catalyses the reaction Endonucleolytic cleavage to 5'-phosphooligonucleotide end-products.. Endonuclease IV plays a role in DNA repair. It cleaves phosphodiester bonds at apurinic or apyrimidinic (AP) sites, generating a 3'-hydroxyl group and a 5'-terminal sugar phosphate. The sequence is that of Probable endonuclease 4 from Thermotoga neapolitana (strain ATCC 49049 / DSM 4359 / NBRC 107923 / NS-E).